Consider the following 218-residue polypeptide: uncharacterized protein (218 aa).

The protein belongs to the mimivirus L6/L7/L57 family.

This is an uncharacterized protein from Acanthamoeba polyphaga mimivirus (APMV).